The chain runs to 150 residues: Histone H2B.2 (150 aa).

2 stretches are compositionally biased toward basic and acidic residues: residues 1-21 (MAPK…KAGE) and 33-49 (EKRL…EGKK). Residues 1 to 58 (MAPKAEKKPAEKKPAEEKAGEKAPAAGKKPKAEKRLPASKGEKGGEGKKERGRKKAKK) form a disordered region. An N6-acetyllysine mark is found at Lys7 and Lys34. Residue Lys146 forms a Glycyl lysine isopeptide (Lys-Gly) (interchain with G-Cter in ubiquitin) linkage.

It belongs to the histone H2B family. In terms of assembly, the nucleosome is a histone octamer containing two molecules each of H2A, H2B, H3 and H4 assembled in one H3-H4 heterotetramer and two H2A-H2B heterodimers. The octamer wraps approximately 147 bp of DNA. In terms of processing, can be acetylated to form H2BK6ac and H2BK33ac. Monoubiquitinated by BRE1 to form H2BK143ub1 and deubiquitinated by UBP26. Required for heterochromatic histone H3 di- and trimethylation at H3K4me. May give a specific tag for epigenetic transcriptional activation.

It is found in the nucleus. The protein resides in the chromosome. In terms of biological role, core component of nucleosome. Nucleosomes wrap and compact DNA into chromatin, limiting DNA accessibility to the cellular machineries which require DNA as a template. Histones thereby play a central role in transcription regulation, DNA repair, DNA replication and chromosomal stability. DNA accessibility is regulated via a complex set of post-translational modifications of histones, also called histone code, and nucleosome remodeling. In Oryza sativa subsp. indica (Rice), this protein is Histone H2B.2 (H2B.2).